A 414-amino-acid chain; its full sequence is GLABROUS1 enhancer-binding protein-like 3 (414 aa).

Disordered regions lie at residues 36 to 57 and 167 to 191; these read QLRTTTTRTTTTRTTPLSLSSS and QAKDVPSGEPETNDVPCEEQDDRDV. The segment covering 38–50 has biased composition (low complexity); sequence RTTTTRTTTTRTT. Residues 382 to 403 are non-canonical leucine-zipper; the sequence is LINEWKALFVDEQRLCVKKLTF.

Belongs to the GeBP family. In terms of assembly, homo- and heterodimers. Interacts with GEBP, GPL1 and GPL2. Interacts with GEBP. Expressed in the apical meristem and young leaf primordia. Detected in the vascular tissues of rosette leaves, in primary and secondary roots and at the base of flowers and siliques.

Its subcellular location is the nucleus. In terms of biological role, probable transcription factor. Involved in stress responses. Plays a repressive role in cell expansion by counteracting the positive role of CPR5 in this process, but does not regulate cell proliferation or endoreduplication. In Arabidopsis thaliana (Mouse-ear cress), this protein is GLABROUS1 enhancer-binding protein-like 3.